The primary structure comprises 402 residues: Glutamyl-tRNA reductase (402 aa).

Residues 48-51, serine 91, 96-98, and glutamine 102 each bind substrate; these read TCNR and EDQ. Residue cysteine 49 is the Nucleophile of the active site. Residue 171 to 176 participates in NADP(+) binding; the sequence is GAGKMG.

It belongs to the glutamyl-tRNA reductase family. In terms of assembly, homodimer.

The enzyme catalyses (S)-4-amino-5-oxopentanoate + tRNA(Glu) + NADP(+) = L-glutamyl-tRNA(Glu) + NADPH + H(+). Its pathway is porphyrin-containing compound metabolism; protoporphyrin-IX biosynthesis; 5-aminolevulinate from L-glutamyl-tRNA(Glu): step 1/2. In terms of biological role, catalyzes the NADPH-dependent reduction of glutamyl-tRNA(Glu) to glutamate 1-semialdehyde (GSA). The chain is Glutamyl-tRNA reductase from Methanothermobacter thermautotrophicus (strain ATCC 29096 / DSM 1053 / JCM 10044 / NBRC 100330 / Delta H) (Methanobacterium thermoautotrophicum).